A 217-amino-acid polypeptide reads, in one-letter code: E3 ubiquitin-protein ligase znrf2 (217 aa).

2 disordered regions span residues 1 to 27 (MGAK…SATA) and 63 to 111 (QFIS…ERST). Gly-2 is lipidated: N-myristoyl glycine. The span at 68-100 (RTRSVGPSARPQSGINIPNSGAYSSADSGNSTP) shows a compositional bias: polar residues. Residues 174–215 (CAICLEELLQGDTIARLPCLCIYHKGCIDEWFEVNRSCPEHP) form an RING-type; atypical zinc finger.

Its subcellular location is the endosome membrane. The protein localises to the lysosome membrane. It localises to the presynaptic cell membrane. The catalysed reaction is S-ubiquitinyl-[E2 ubiquitin-conjugating enzyme]-L-cysteine + [acceptor protein]-L-lysine = [E2 ubiquitin-conjugating enzyme]-L-cysteine + N(6)-ubiquitinyl-[acceptor protein]-L-lysine.. It functions in the pathway protein modification; protein ubiquitination. Its function is as follows. May play a role in the establishment and maintenance of neuronal transmission and plasticity via its ubiquitin ligase activity. E3 ubiquitin ligases accept ubiquitin from an E2 ubiquitin-conjugating enzyme in the form of a thioester and then directly transfer the ubiquitin to targeted substrates. This Danio rerio (Zebrafish) protein is E3 ubiquitin-protein ligase znrf2 (znrf2).